Here is a 158-residue protein sequence, read N- to C-terminus: Transcription elongation factor GreA (158 aa).

Residues 47–74 (AEYHAAKEEQSHNEGRIAELEDKLARAD) adopt a coiled-coil conformation.

Belongs to the GreA/GreB family.

Necessary for efficient RNA polymerase transcription elongation past template-encoded arresting sites. The arresting sites in DNA have the property of trapping a certain fraction of elongating RNA polymerases that pass through, resulting in locked ternary complexes. Cleavage of the nascent transcript by cleavage factors such as GreA or GreB allows the resumption of elongation from the new 3'terminus. GreA releases sequences of 2 to 3 nucleotides. The sequence is that of Transcription elongation factor GreA from Bradyrhizobium sp. (strain BTAi1 / ATCC BAA-1182).